The following is a 557-amino-acid chain: Potassium-transporting ATPase potassium-binding subunit (557 aa).

12 consecutive transmembrane segments (helical) span residues 5–25 (GFLL…PLGS), 63–83 (LCAI…MLLG), 132–152 (GLTV…FAFI), 170–190 (LLRI…LFLI), 253–273 (FVQM…FGEV), 283–303 (LLWA…WAEV), 329–349 (VLVS…AVIA), 356–376 (ALGG…FGGV), 379–399 (GLYG…LMIG), 416–436 (LTAL…ALAM), 484–504 (LLAF…MAIA), and 526–546 (LFVG…FIPA).

The protein belongs to the KdpA family. In terms of assembly, the system is composed of three essential subunits: KdpA, KdpB and KdpC.

The protein resides in the cell inner membrane. Part of the high-affinity ATP-driven potassium transport (or Kdp) system, which catalyzes the hydrolysis of ATP coupled with the electrogenic transport of potassium into the cytoplasm. This subunit binds the periplasmic potassium ions and delivers the ions to the membrane domain of KdpB through an intramembrane tunnel. The sequence is that of Potassium-transporting ATPase potassium-binding subunit from Shigella boydii serotype 18 (strain CDC 3083-94 / BS512).